We begin with the raw amino-acid sequence, 121 residues long: uncharacterized protein (121 aa).

Disordered regions lie at residues methionine 1–arginine 41 and glycine 94–arginine 121. Over residues serine 98–proline 108 the composition is skewed to polar residues.

Predominantly expressed in tissues containing motile cilia. Also expressed in non-motile ciliated adult olfactory bulbs.

The protein resides in the cytoplasm. It localises to the cytoskeleton. It is found in the cilium basal body. This is an uncharacterized protein from Mus musculus (Mouse).